The chain runs to 147 residues: UPF0216 protein MK1676 (147 aa).

The protein belongs to the UPF0216 family.

This is UPF0216 protein MK1676 from Methanopyrus kandleri (strain AV19 / DSM 6324 / JCM 9639 / NBRC 100938).